The sequence spans 288 residues: Transmembrane and coiled-coil domain-containing protein 5A (288 aa).

Residues 10–189 (KKNIISLNMD…ELETGYLERE (180 aa)) are a coiled coil. The helical transmembrane segment at 227 to 249 (SLLFSTLFFIRLLGYLIFHLSFI) threads the bilayer.

The protein belongs to the TMCO5 family. In terms of tissue distribution, only detected in testis (at protein level).

The protein localises to the endoplasmic reticulum membrane. It is found in the nucleus membrane. This Mus musculus (Mouse) protein is Transmembrane and coiled-coil domain-containing protein 5A (Tmco5a).